Reading from the N-terminus, the 538-residue chain is Acetylcholine receptor subunit alpha-type acr-7 (538 aa).

A signal peptide spans Met1–Gly27. Residues Ser28–Tyr250 are Extracellular-facing. N-linked (GlcNAc...) asparagine glycosylation is found at Asn41 and Asn101. Intrachain disulfides connect Cys160–Cys174 and Cys229–Cys230. 3 helical membrane-spanning segments follow: residues Val251–Leu271, Ile280–Met300, and Val313–Leu333. At Asn334–Cys513 the chain is on the cytoplasmic side. A helical transmembrane segment spans residues Leu514–Ile534.

Belongs to the ligand-gated ion channel (TC 1.A.9) family. Acetylcholine receptor (TC 1.A.9.1) subfamily. In terms of assembly, forms a homooligomeric channel blocked by alpha-bungarotoxin. The structure is probably pentameric.

Its subcellular location is the postsynaptic cell membrane. The protein resides in the cell membrane. After binding acetylcholine, the AChR responds by an extensive change in conformation that affects all subunits and leads to opening of an ion-conducting channel across the plasma membrane. This Caenorhabditis elegans protein is Acetylcholine receptor subunit alpha-type acr-7 (acr-7).